Here is a 379-residue protein sequence, read N- to C-terminus: Cytochrome b (379 aa).

4 helical membrane passes run 33 to 53 (FGSL…FLAM), 77 to 98 (WLIR…FIHV), 113 to 133 (WNIG…GYVL), and 178 to 198 (FFAF…VHLL). Residues histidine 83 and histidine 97 each contribute to the heme b site. Residues histidine 182 and histidine 196 each contribute to the heme b site. Histidine 201 is a binding site for a ubiquinone. Helical transmembrane passes span 226-246 (IKDL…TLFF), 288-308 (LGGV…PLLN), 320-340 (VTQV…WIGG), and 347-367 (FTMI…ILIP).

This sequence belongs to the cytochrome b family. The cytochrome bc1 complex contains 11 subunits: 3 respiratory subunits (MT-CYB, CYC1 and UQCRFS1), 2 core proteins (UQCRC1 and UQCRC2) and 6 low-molecular weight proteins (UQCRH/QCR6, UQCRB/QCR7, UQCRQ/QCR8, UQCR10/QCR9, UQCR11/QCR10 and a cleavage product of UQCRFS1). This cytochrome bc1 complex then forms a dimer. Heme b is required as a cofactor.

Its subcellular location is the mitochondrion inner membrane. Its function is as follows. Component of the ubiquinol-cytochrome c reductase complex (complex III or cytochrome b-c1 complex) that is part of the mitochondrial respiratory chain. The b-c1 complex mediates electron transfer from ubiquinol to cytochrome c. Contributes to the generation of a proton gradient across the mitochondrial membrane that is then used for ATP synthesis. This Akodon subfuscus (Puno grass mouse) protein is Cytochrome b (MT-CYB).